We begin with the raw amino-acid sequence, 771 residues long: 5-methyltetrahydropteroyltriglutamate--homocysteine methyltransferase (771 aa).

Residues 16-19 (RELK) and Lys117 each bind 5-methyltetrahydropteroyltri-L-glutamate. L-homocysteine-binding positions include 443–445 (IGS) and Glu496. L-methionine contacts are provided by residues 443–445 (IGS) and Glu496. 5-methyltetrahydropteroyltri-L-glutamate is bound by residues 527 to 528 (RC) and Trp573. Asp611 is an L-homocysteine binding site. Asp611 is an L-methionine binding site. A 5-methyltetrahydropteroyltri-L-glutamate-binding site is contributed by Glu617. Zn(2+) is bound by residues His653, Cys655, and Glu677. Catalysis depends on His706, which acts as the Proton donor. Cys738 contacts Zn(2+).

It belongs to the vitamin-B12 independent methionine synthase family. The cofactor is Zn(2+).

The catalysed reaction is 5-methyltetrahydropteroyltri-L-glutamate + L-homocysteine = tetrahydropteroyltri-L-glutamate + L-methionine. Its pathway is amino-acid biosynthesis; L-methionine biosynthesis via de novo pathway; L-methionine from L-homocysteine (MetE route): step 1/1. In terms of biological role, catalyzes the transfer of a methyl group from 5-methyltetrahydrofolate to homocysteine resulting in methionine formation. This Stutzerimonas stutzeri (strain A1501) (Pseudomonas stutzeri) protein is 5-methyltetrahydropteroyltriglutamate--homocysteine methyltransferase.